We begin with the raw amino-acid sequence, 399 residues long: MTQTIPSPKPWSINKPTALLVLANGTVIEGKGAGATGFAEAEICFNTAMTGYEEILTDPSYKKQIVNFTFPHIGNVGTNSEDIEDLIPLNCHGAVGAIFKADITHPSNYRANENLNQWLKKRKIIALCGIDTRALTVLIREKGALNGIIAHDPNGNFDINTLKKRAQKWTGLVNLDLAQEVTSKQSMKWNEKPWVWNKGYKTNNDASNFHIVAIDYGIKRNILRLIAAHSAHITIVPANTNIEEILAMNPDGVFLSNGPGDPAATANYAVPTIQALIDSNIPLFGICLGHQLLALAVGAKTIKMHQGHHGANHPVKDFITGKVEIVSMNHGFTVDTTSLPQHVEETHISLFDNSNCGLRIIGKPVFSVQHHPEASPGPQDSHYLFQRFFNLIMDYKKTA.

The segment at 1-206 (MTQTIPSPKP…NKGYKTNNDA (206 aa)) is CPSase. L-glutamine-binding residues include Ser-60, Gly-258, and Gly-260. The 189-residue stretch at 210–398 (HIVAIDYGIK…FNLIMDYKKT (189 aa)) folds into the Glutamine amidotransferase type-1 domain. Cys-287 acts as the Nucleophile in catalysis. Positions 288, 291, 329, 331, and 332 each coordinate L-glutamine. Active-site residues include His-371 and Glu-373.

Belongs to the CarA family. In terms of assembly, composed of two chains; the small (or glutamine) chain promotes the hydrolysis of glutamine to ammonia, which is used by the large (or ammonia) chain to synthesize carbamoyl phosphate. Tetramer of heterodimers (alpha,beta)4.

The enzyme catalyses hydrogencarbonate + L-glutamine + 2 ATP + H2O = carbamoyl phosphate + L-glutamate + 2 ADP + phosphate + 2 H(+). It carries out the reaction L-glutamine + H2O = L-glutamate + NH4(+). It functions in the pathway amino-acid biosynthesis; L-arginine biosynthesis; carbamoyl phosphate from bicarbonate: step 1/1. The protein operates within pyrimidine metabolism; UMP biosynthesis via de novo pathway; (S)-dihydroorotate from bicarbonate: step 1/3. In terms of biological role, small subunit of the glutamine-dependent carbamoyl phosphate synthetase (CPSase). CPSase catalyzes the formation of carbamoyl phosphate from the ammonia moiety of glutamine, carbonate, and phosphate donated by ATP, constituting the first step of 2 biosynthetic pathways, one leading to arginine and/or urea and the other to pyrimidine nucleotides. The small subunit (glutamine amidotransferase) binds and cleaves glutamine to supply the large subunit with the substrate ammonia. The protein is Carbamoyl phosphate synthase small chain of Bartonella henselae (strain ATCC 49882 / DSM 28221 / CCUG 30454 / Houston 1) (Rochalimaea henselae).